The sequence spans 404 residues: CCA-adding enzyme (404 aa).

The ATP site is built by G32 and R35. Positions 32 and 35 each coordinate CTP. 2 residues coordinate Mg(2+): D45 and D47. Residues R116, D159, R162, R165, and R168 each coordinate ATP. Residues R116, D159, R162, R165, and R168 each contribute to the CTP site.

This sequence belongs to the tRNA nucleotidyltransferase/poly(A) polymerase family. Bacterial CCA-adding enzyme type 3 subfamily. As to quaternary structure, homodimer. Requires Mg(2+) as cofactor.

The enzyme catalyses a tRNA precursor + 2 CTP + ATP = a tRNA with a 3' CCA end + 3 diphosphate. It carries out the reaction a tRNA with a 3' CCA end + 2 CTP + ATP = a tRNA with a 3' CCACCA end + 3 diphosphate. In terms of biological role, catalyzes the addition and repair of the essential 3'-terminal CCA sequence in tRNAs without using a nucleic acid template. Adds these three nucleotides in the order of C, C, and A to the tRNA nucleotide-73, using CTP and ATP as substrates and producing inorganic pyrophosphate. tRNA 3'-terminal CCA addition is required both for tRNA processing and repair. Also involved in tRNA surveillance by mediating tandem CCA addition to generate a CCACCA at the 3' terminus of unstable tRNAs. While stable tRNAs receive only 3'-terminal CCA, unstable tRNAs are marked with CCACCA and rapidly degraded. This is CCA-adding enzyme from Ligilactobacillus salivarius (strain UCC118) (Lactobacillus salivarius).